The sequence spans 468 residues: UDP-N-acetylmuramoylalanine--D-glutamate ligase (468 aa).

Gly-117 to Thr-123 provides a ligand contact to ATP.

This sequence belongs to the MurCDEF family.

It is found in the cytoplasm. It catalyses the reaction UDP-N-acetyl-alpha-D-muramoyl-L-alanine + D-glutamate + ATP = UDP-N-acetyl-alpha-D-muramoyl-L-alanyl-D-glutamate + ADP + phosphate + H(+). The protein operates within cell wall biogenesis; peptidoglycan biosynthesis. In terms of biological role, cell wall formation. Catalyzes the addition of glutamate to the nucleotide precursor UDP-N-acetylmuramoyl-L-alanine (UMA). The sequence is that of UDP-N-acetylmuramoylalanine--D-glutamate ligase from Chloroherpeton thalassium (strain ATCC 35110 / GB-78).